The following is a 250-amino-acid chain: UPF0309 protein BH0227 (250 aa).

The 184-residue stretch at 31–214 (VAESIQNGGI…KRMADNGYEP (184 aa)) folds into the SIS domain.

The protein belongs to the UPF0309 family.

This Halalkalibacterium halodurans (strain ATCC BAA-125 / DSM 18197 / FERM 7344 / JCM 9153 / C-125) (Bacillus halodurans) protein is UPF0309 protein BH0227.